Here is a 1405-residue protein sequence, read N- to C-terminus: Protein translocase subunit SecA (1405 aa).

A protein translocase subunit SecA region spans residues 1-1099 (MHMKIKKFKK…SDYKKLNEDE (1099 aa)). ATP is bound by residues Q88, 106–110 (GEGKS), and D494. Positions 1100-1405 (SDDDIKAFYK…LDYLKENNKK (306 aa)) are unknown.

It belongs to the SecA family. Monomer and homodimer. Part of the essential Sec protein translocation apparatus which comprises SecA, SecYEG and auxiliary proteins SecDF. Other proteins may also be involved.

It localises to the cell membrane. The protein localises to the cytoplasm. The enzyme catalyses ATP + H2O + cellular proteinSide 1 = ADP + phosphate + cellular proteinSide 2.. Its function is as follows. Part of the Sec protein translocase complex. Interacts with the SecYEG preprotein conducting channel. Has a central role in coupling the hydrolysis of ATP to the transfer of proteins into and across the cell membrane, serving as an ATP-driven molecular motor driving the stepwise translocation of polypeptide chains across the membrane. The protein is Protein translocase subunit SecA of Malacoplasma penetrans (strain HF-2) (Mycoplasma penetrans).